The following is a 66-amino-acid chain: MAKNKGVRIVITLECNECRSNPAIDKRSHGVSRYTTEKNRRNTTERLEIKKFCRYCNKSTTHKEIK.

This sequence belongs to the bacterial ribosomal protein bL33 family.

The protein is Large ribosomal subunit protein bL33 of Prochlorococcus marinus (strain MIT 9303).